The primary structure comprises 171 residues: MAMTSSGIILTTVEEVLSWGRRNSLWPVSVGLACCAIEMMHTAASRFDTDRLGIIFRGSPRQSDVLIVAGTVVNKVAPMLRLIYEQMPDPKWVISMGGCASAGGPFPTYPTLQGVDRIIPVDVYIPGCPPTPQALLWGILELQKKIKAKKEGKELIEIPIKVPQESKPISK.

[4Fe-4S] cluster-binding residues include C34, C35, C99, and C128.

This sequence belongs to the complex I 20 kDa subunit family. NDH-1 is composed of 14 different subunits. Subunits NuoB, C, D, E, F, and G constitute the peripheral sector of the complex. It depends on [4Fe-4S] cluster as a cofactor.

It is found in the cell inner membrane. The enzyme catalyses a quinone + NADH + 5 H(+)(in) = a quinol + NAD(+) + 4 H(+)(out). NDH-1 shuttles electrons from NADH, via FMN and iron-sulfur (Fe-S) centers, to quinones in the respiratory chain. The immediate electron acceptor for the enzyme in this species is believed to be ubiquinone. Couples the redox reaction to proton translocation (for every two electrons transferred, four hydrogen ions are translocated across the cytoplasmic membrane), and thus conserves the redox energy in a proton gradient. This Sulfurihydrogenibium sp. (strain YO3AOP1) protein is NADH-quinone oxidoreductase subunit B.